The primary structure comprises 417 residues: Carboxypeptidase B (417 aa).

The N-terminal stretch at 1-16 is a signal peptide; that stretch reads MLAFLILVTVTLASAH. The propeptide at 17-110 is activation peptide; it reads HSGEHFEGDK…LEAQFDSRVR (94 aa). The region spanning 118–412 is the Peptidase M14 domain; that stretch reads KYNNWETIEA…LAIKYVTSYV (295 aa). The cysteines at positions 173 and 186 are disulfide-linked. The Zn(2+) site is built by H176 and E179. Residues 176–179, R234, and 251–252 each bind substrate; these read HARE and NR. Disulfide bonds link C245-C268 and C259-C273. A Zn(2+)-binding site is contributed by H304. Substrate-binding positions include 305–306 and Y356; that span reads SY. The active-site Proton donor/acceptor is E378.

It belongs to the peptidase M14 family. Requires Zn(2+) as cofactor.

The protein resides in the secreted. It is found in the zymogen granule lumen. The enzyme catalyses Preferential release of a C-terminal lysine or arginine amino acid.. In Bos taurus (Bovine), this protein is Carboxypeptidase B (CPB1).